We begin with the raw amino-acid sequence, 504 residues long: Galactokinase (504 aa).

R47, D53, H54, and D56 together coordinate alpha-D-galactose. 4 residues coordinate ATP: G150, G152, S154, and S155. Alpha-D-galactose-binding residues include N196 and D200. D200 (proton acceptor) is an active-site residue. The ATP site is built by S244, N245, and K246. Residue Y254 coordinates alpha-D-galactose.

This sequence belongs to the GHMP kinase family. GalK subfamily.

The enzyme catalyses alpha-D-galactose + ATP = alpha-D-galactose 1-phosphate + ADP + H(+). It participates in carbohydrate metabolism; galactose metabolism. Functionally, galactokinase is a key enzyme in the galactose metabolism where it catalyzes the conversion of alpha-D-galactose to galactose 1-phosphate. Can also induce the transcription of the gal genes in response to the organism being challenged with galactose as the sole source of carbon. In Candida parapsilosis (Yeast), this protein is Galactokinase.